Reading from the N-terminus, the 237-residue chain is Sugar fermentation stimulation protein homolog (237 aa).

Belongs to the SfsA family.

In Actinobacillus pleuropneumoniae serotype 3 (strain JL03), this protein is Sugar fermentation stimulation protein homolog.